A 254-amino-acid polypeptide reads, in one-letter code: Probable triosephosphate isomerase 2 (254 aa).

Residue 9 to 11 (NMK) participates in substrate binding. H96 functions as the Electrophile in the catalytic mechanism. The active-site Proton acceptor is the E168. 2 residues coordinate substrate: G174 and S212.

This sequence belongs to the triosephosphate isomerase family. As to quaternary structure, homodimer.

The protein localises to the cytoplasm. It carries out the reaction D-glyceraldehyde 3-phosphate = dihydroxyacetone phosphate. It participates in carbohydrate biosynthesis; gluconeogenesis. It functions in the pathway carbohydrate degradation; glycolysis; D-glyceraldehyde 3-phosphate from glycerone phosphate: step 1/1. Functionally, involved in the gluconeogenesis. Catalyzes stereospecifically the conversion of dihydroxyacetone phosphate (DHAP) to D-glyceraldehyde-3-phosphate (G3P). This chain is Probable triosephosphate isomerase 2, found in Listeria monocytogenes serovar 1/2a (strain ATCC BAA-679 / EGD-e).